A 131-amino-acid polypeptide reads, in one-letter code: Large ribosomal subunit protein bL17 (131 aa).

Belongs to the bacterial ribosomal protein bL17 family. In terms of assembly, part of the 50S ribosomal subunit. Contacts protein L32.

The polypeptide is Large ribosomal subunit protein bL17 (Methylibium petroleiphilum (strain ATCC BAA-1232 / LMG 22953 / PM1)).